The sequence spans 354 residues: Protein NDH-DEPENDENT CYCLIC ELECTRON FLOW 5 (354 aa).

A chloroplast-targeting transit peptide spans 1 to 49 (MALVHYMNVSRSTFPLSRSSKINLSSSFASLPLQFHKNIKRLESSVPPS).

The protein resides in the plastid. It is found in the chloroplast thylakoid membrane. Functionally, required for both formation and activity of the chloroplast NAD(P)H dehydrogenase (NDH) complex of the photosynthetic electron transport chain. May function in assembly or stabilization of the NDH complex. This is Protein NDH-DEPENDENT CYCLIC ELECTRON FLOW 5 from Arabidopsis thaliana (Mouse-ear cress).